The chain runs to 867 residues: Cadherin-related family member 1 (867 aa).

The signal sequence occupies residues 1 to 21 (MGRGPPAVLAPWMLFLSLAQA). Residues 22 to 701 (NFAPHFFDNG…LMQTKDNPMK (680 aa)) are Extracellular-facing. Cadherin domains follow at residues 36-135 (NGNM…APRF), 136-247 (IQEP…GPVF), 248-354 (VGTP…PPTF), 360-473 (PQNR…VPKF), 474-577 (TSHY…YPQF), and 574-689 (YPQF…SPMA). N-linked (GlcNAc...) asparagine glycans are attached at residues Asn58 and Asn89. N-linked (GlcNAc...) asparagine glycosylation is found at Asn288 and Asn297. A helical membrane pass occupies residues 702–722 (AVGVLAGIMAIIVAITVLIST). Over 723–867 (ATFWRNKKSN…KKNLHSKAYF (145 aa)) the chain is Cytoplasmic. The segment at 767-843 (KFVLREAPPN…VAKRKAVGSP (77 aa)) is disordered. The segment covering 777-786 (ENCNNNSRGS) has biased composition (polar residues). A compositionally biased stretch (pro residues) spans 790-802 (PQAPAPPPPPSPA).

In terms of assembly, interacts with PROM1. In terms of processing, undergoes proteolytic cleavage; produces a soluble 95 kDa N-terminal fragment and a 25 kDa cell-associated C-terminal fragment. Expressed in photoreceptor cells of the outer nuclear layer of the retina.

It localises to the cell membrane. Functionally, potential calcium-dependent cell-adhesion protein. May be required for the structural integrity of the outer segment (OS) of photoreceptor cells. The chain is Cadherin-related family member 1 (CDHR1) from Bos taurus (Bovine).